Consider the following 88-residue polypeptide: Large ribosomal subunit protein bL27 (88 aa).

Residues 1-25 are disordered; that stretch reads MAHKKAGGSSRNGRDSPGQRRGIKR.

The protein belongs to the bacterial ribosomal protein bL27 family.

This is Large ribosomal subunit protein bL27 (rpmA) from Lawsonia intracellularis.